A 672-amino-acid polypeptide reads, in one-letter code: 2,4-dienoyl-CoA reductase [(2E)-enoyl-CoA-producing] (672 aa).

FMN contacts are provided by residues 25–27 (SMH), Gly-59, and Gln-101. Tyr-167 functions as the Proton donor in the catalytic mechanism. Residue Arg-176 participates in substrate binding. Position 215 (Arg-215) interacts with FMN. A substrate-binding site is contributed by 253-256 (HEAR). Residues Arg-289 and 311–312 (AR) each bind FMN. Residues Cys-335 and Cys-338 each coordinate [4Fe-4S] cluster. Gln-340 contacts FAD. Gln-340 lines the NADP(+) pocket. [4Fe-4S] cluster contacts are provided by Cys-342 and Cys-354. FAD contacts are provided by Ala-385, Asp-404, Gln-412, Lys-422, and Val-449. Residue 563-564 (RK) participates in NADP(+) binding. 2 residues coordinate substrate: Lys-567 and Trp-578. Residues Gly-649 and 656–658 (LDA) contribute to the FAD site. 654 to 656 (MEL) lines the NADP(+) pocket.

This sequence in the N-terminal section; belongs to the NADH:flavin oxidoreductase/NADH oxidase family. In terms of assembly, monomer. The cofactor is FMN. FAD serves as cofactor. Requires [4Fe-4S] cluster as cofactor.

It carries out the reaction a 4,5-saturated-(2E)-enoyl-CoA + NADP(+) = a (2E,4E)-dienoyl-CoA + NADPH + H(+). The enzyme catalyses a (2E,4Z)-dienoyl-CoA + NADPH + H(+) = a 4,5-saturated-(2E)-enoyl-CoA + NADP(+). The catalysed reaction is (2E)-decenoyl-CoA + NADP(+) = (2E,4E)-decadienoyl-CoA + NADPH + H(+). It catalyses the reaction (2E)-decenoyl-CoA + NADP(+) = (2E,4Z)-decadienoyl-CoA + NADPH + H(+). Its pathway is lipid metabolism; fatty acid beta-oxidation. Is non-competitively inhibited by NADH. Its function is as follows. Functions as an auxiliary enzyme in the beta-oxidation of unsaturated fatty acids with double bonds at even carbon positions. Catalyzes the NADPH-dependent reduction of the C4-C5 double bond of the acyl chain of 2,4-dienoyl-CoA to yield 2-trans-enoyl-CoA. Acts on both isomers, 2-trans,4-cis- and 2-trans,4-trans-decadienoyl-CoA, with almost equal efficiency. Is not active with NADH instead of NADPH. Does not show cis-&gt;trans isomerase activity. This is 2,4-dienoyl-CoA reductase [(2E)-enoyl-CoA-producing] from Escherichia coli (strain K12).